Consider the following 171-residue polypeptide: Der GTPase-activating protein YihI (171 aa).

Disordered regions lie at residues 1–99 (MKKP…PQAE) and 145–171 (GLSYEDDEDDEEEEKQDDMMRLLKGGN). Positions 20 to 30 (TREELNQEARD) are enriched in basic and acidic residues. Positions 40–59 (HSAGSRANGSSASGSTAQNS) are enriched in low complexity. Over residues 148–160 (YEDDEDDEEEEKQ) the composition is skewed to acidic residues.

It belongs to the YihI family. Interacts with Der.

A GTPase-activating protein (GAP) that modifies Der/EngA GTPase function. May play a role in ribosome biogenesis. This is Der GTPase-activating protein YihI from Enterobacter sp. (strain 638).